The following is a 284-amino-acid chain: Ubiquinone biosynthesis protein COQ4, mitochondrial (284 aa).

Positions 165, 166, 169, and 181 each coordinate Zn(2+).

Belongs to the COQ4 family. As to quaternary structure, component of a multi-subunit COQ enzyme complex, composed of at least COQ3, COQ4, COQ5, COQ6, COQ7 and COQ9. Zn(2+) is required as a cofactor.

It localises to the mitochondrion inner membrane. It catalyses the reaction a 4-hydroxy-3-methoxy-5-(all-trans-polyprenyl)benzoate + H(+) = a 2-methoxy-6-(all-trans-polyprenyl)phenol + CO2. It participates in cofactor biosynthesis; ubiquinone biosynthesis. Lyase that catalyzes the C1-decarboxylation of 4-hydroxy-3-methoxy-5-(all-trans-polyprenyl)benzoic acid into 2-methoxy-6-(all-trans-polyprenyl)phenol during ubiquinone biosynthesis. The chain is Ubiquinone biosynthesis protein COQ4, mitochondrial from Ajellomyces dermatitidis (strain ER-3 / ATCC MYA-2586) (Blastomyces dermatitidis).